A 476-amino-acid polypeptide reads, in one-letter code: Homeobox protein invected (476 aa).

3 disordered regions span residues 1 to 43, 273 to 331, and 347 to 381; these read MAAV…SEDI, KTRY…TSGD, and DRPS…AFSG. Polar residues predominate over residues 23 to 32; it reads SPNTRDTTSP. 2 stretches are compositionally biased toward basic and acidic residues: residues 33-43 and 292-305; these read ECHDDEKSEDI and KLDE…KTPD. The segment covering 318-331 has biased composition (low complexity); it reads GSNSGSTSGATSGD. A DNA-binding region (homeobox) is located at residues 372–431; that stretch reads EKRPRTAFSGPQLARLKHEFAENRYLTERRRQSLAAELGLAEAQIKIWFQNKRAKIKKAS.

Belongs to the engrailed homeobox family. Expressed in the middle silk gland but not in the posterior silk gland during the fourth molt/fifth intermolt period.

Its subcellular location is the nucleus. This protein might be involved in the compartmentalization of the silk gland. The chain is Homeobox protein invected (INV) from Bombyx mori (Silk moth).